The primary structure comprises 213 residues: tRNA (guanine-N(7)-)-methyltransferase (213 aa).

S-adenosyl-L-methionine is bound by residues Glu-44, Glu-69, Asp-96, and Asp-118. Residue Asp-118 is part of the active site. Substrate-binding positions include Lys-122, Asp-154, and 191–194 (TEYE).

This sequence belongs to the class I-like SAM-binding methyltransferase superfamily. TrmB family.

It carries out the reaction guanosine(46) in tRNA + S-adenosyl-L-methionine = N(7)-methylguanosine(46) in tRNA + S-adenosyl-L-homocysteine. It participates in tRNA modification; N(7)-methylguanine-tRNA biosynthesis. Catalyzes the formation of N(7)-methylguanine at position 46 (m7G46) in tRNA. The polypeptide is tRNA (guanine-N(7)-)-methyltransferase (Exiguobacterium sibiricum (strain DSM 17290 / CCUG 55495 / CIP 109462 / JCM 13490 / 255-15)).